A 285-amino-acid chain; its full sequence is Probable nudix hydrolase C6G9.05 (285 aa).

Residues 114–254 (TRFASVLMPL…DLLYVEFNID (141 aa)) form the Nudix hydrolase domain. A Nudix box motif is present at residues 153–175 (GRVEPSDGSHYYAALRETYEEIG). Residues Glu169 and Glu173 each contribute to the Mg(2+) site.

The protein belongs to the Nudix hydrolase family. PCD1 subfamily. It depends on Mn(2+) as a cofactor. Mg(2+) is required as a cofactor.

Its function is as follows. Probably mediates the hydrolysis of some nucleoside diphosphate derivatives. This chain is Probable nudix hydrolase C6G9.05, found in Schizosaccharomyces pombe (strain 972 / ATCC 24843) (Fission yeast).